We begin with the raw amino-acid sequence, 425 residues long: Trigger factor (425 aa).

Residues G158 to P231 enclose the PPIase FKBP-type domain.

This sequence belongs to the FKBP-type PPIase family. Tig subfamily.

Its subcellular location is the cytoplasm. The catalysed reaction is [protein]-peptidylproline (omega=180) = [protein]-peptidylproline (omega=0). Involved in protein export. Acts as a chaperone by maintaining the newly synthesized protein in an open conformation. Functions as a peptidyl-prolyl cis-trans isomerase. The protein is Trigger factor of Thermotoga neapolitana (strain ATCC 49049 / DSM 4359 / NBRC 107923 / NS-E).